The following is a 60-amino-acid chain: Large ribosomal subunit protein uL30 (60 aa).

This sequence belongs to the universal ribosomal protein uL30 family. As to quaternary structure, part of the 50S ribosomal subunit.

The sequence is that of Large ribosomal subunit protein uL30 from Dechloromonas aromatica (strain RCB).